We begin with the raw amino-acid sequence, 196 residues long: ATP-dependent Clp protease proteolytic subunit (196 aa).

Residue Ser101 is the Nucleophile of the active site. Residue His126 is part of the active site.

It belongs to the peptidase S14 family. Component of the chloroplastic Clp protease core complex.

The protein localises to the plastid. The protein resides in the chloroplast stroma. The enzyme catalyses Hydrolysis of proteins to small peptides in the presence of ATP and magnesium. alpha-casein is the usual test substrate. In the absence of ATP, only oligopeptides shorter than five residues are hydrolyzed (such as succinyl-Leu-Tyr-|-NHMec, and Leu-Tyr-Leu-|-Tyr-Trp, in which cleavage of the -Tyr-|-Leu- and -Tyr-|-Trp bonds also occurs).. Its function is as follows. Cleaves peptides in various proteins in a process that requires ATP hydrolysis. Has a chymotrypsin-like activity. Plays a major role in the degradation of misfolded proteins. The sequence is that of ATP-dependent Clp protease proteolytic subunit from Spinacia oleracea (Spinach).